We begin with the raw amino-acid sequence, 131 residues long: D-ribose pyranase (131 aa).

His20 (proton donor) is an active-site residue. Substrate is bound by residues Asp28, His98, and 120 to 122 (YAN).

This sequence belongs to the RbsD / FucU family. RbsD subfamily. In terms of assembly, homodecamer.

The protein localises to the cytoplasm. It carries out the reaction beta-D-ribopyranose = beta-D-ribofuranose. Its pathway is carbohydrate metabolism; D-ribose degradation; D-ribose 5-phosphate from beta-D-ribopyranose: step 1/2. Functionally, catalyzes the interconversion of beta-pyran and beta-furan forms of D-ribose. This is D-ribose pyranase from Bacillus velezensis (strain DSM 23117 / BGSC 10A6 / LMG 26770 / FZB42) (Bacillus amyloliquefaciens subsp. plantarum).